The chain runs to 265 residues: Apolipoprotein A-I (265 aa).

The N-terminal stretch at 1–18 is a signal peptide; the sequence is MKAVVLTLAVLFLTGSQA. 2 tandem repeats follow at residues 67–88 and 89–110. Residues 67-265 are 10 X approximate tandem repeats; the sequence is LKLLDNWDSL…DEASKKLNAQ (199 aa). Residue M109 is modified to Methionine sulfoxide. Residues 111–121 form a 3; half-length repeat; the sequence is KDLQEVKQKVQ. 5 repeat units span residues 122-142, 144-165, 166-187, 188-209, and 210-230. Residues 231–241 form a 9; half-length repeat; it reads PALEDLRQGLL. Residues 242 to 265 form repeat 10; that stretch reads PVLENLKVSILAAIDEASKKLNAQ.

Belongs to the apolipoprotein A1/A4/E family. In terms of assembly, homodimer. Interacts with APOA1BP and CLU. Component of a sperm activating protein complex (SPAP), consisting of APOA1, an immunoglobulin heavy chain, an immunoglobulin light chain and albumin. Interacts with NDRG1. Interacts with SCGB3A2. Interacts with NAXE and YJEFN3. Post-translationally, glycosylated. In terms of processing, palmitoylated. Phosphorylation sites are present in the extracellular medium. In terms of tissue distribution, major protein of plasma HDL, also found in chylomicrons.

It is found in the secreted. Its function is as follows. Participates in the reverse transport of cholesterol from tissues to the liver for excretion by promoting cholesterol efflux from tissues and by acting as a cofactor for the lecithin cholesterol acyltransferase (LCAT). As part of the SPAP complex, activates spermatozoa motility. The chain is Apolipoprotein A-I (APOA1) from Balaenoptera acutorostrata scammoni (North Pacific minke whale).